Here is a 130-residue protein sequence, read N- to C-terminus: Small ribosomal subunit protein uS11 (130 aa).

Belongs to the universal ribosomal protein uS11 family. Part of the 30S ribosomal subunit. Interacts with proteins S7 and S18. Binds to IF-3.

In terms of biological role, located on the platform of the 30S subunit, it bridges several disparate RNA helices of the 16S rRNA. Forms part of the Shine-Dalgarno cleft in the 70S ribosome. The sequence is that of Small ribosomal subunit protein uS11 from Buchnera aphidicola subsp. Cinara cedri (strain Cc).